We begin with the raw amino-acid sequence, 232 residues long: Small ribosomal subunit protein uS3 (232 aa).

A KH type-2 domain is found at 39 to 107 (VRQFLTKELS…PAQINIAEVR (69 aa)).

Belongs to the universal ribosomal protein uS3 family. Part of the 30S ribosomal subunit. Forms a tight complex with proteins S10 and S14.

Its function is as follows. Binds the lower part of the 30S subunit head. Binds mRNA in the 70S ribosome, positioning it for translation. The sequence is that of Small ribosomal subunit protein uS3 from Sodalis glossinidius (strain morsitans).